The chain runs to 541 residues: Membrane protein insertase YidC (541 aa).

6 helical membrane-spanning segments follow: residues 6-26 (NILL…WQAD), 325-345 (LVVD…LLMF), 349-369 (FVGN…GLLF), 420-440 (GGCL…WVLL), 457-477 (LSVQ…MFVM), and 500-520 (VIFT…WLVG).

It belongs to the OXA1/ALB3/YidC family. Type 1 subfamily. Interacts with the Sec translocase complex via SecD. Specifically interacts with transmembrane segments of nascent integral membrane proteins during membrane integration.

The protein localises to the cell inner membrane. Required for the insertion and/or proper folding and/or complex formation of integral membrane proteins into the membrane. Involved in integration of membrane proteins that insert both dependently and independently of the Sec translocase complex, as well as at least some lipoproteins. Aids folding of multispanning membrane proteins. This Shewanella baltica (strain OS195) protein is Membrane protein insertase YidC.